The sequence spans 120 residues: Putative B3 domain-containing protein At3g28853 (120 aa).

Residues isoleucine 19–isoleucine 120 constitute a DNA-binding region (TF-B3).

It is found in the nucleus. This is Putative B3 domain-containing protein At3g28853 from Arabidopsis thaliana (Mouse-ear cress).